We begin with the raw amino-acid sequence, 407 residues long: Phosphoglycerate kinase (407 aa).

Residues 21–23, R36, 59–62, R116, and R156 contribute to the substrate site; these read DLN and HQGR. ATP is bound by residues E332 and 358 to 361; that span reads GGDT.

Belongs to the phosphoglycerate kinase family. As to quaternary structure, monomer.

Its subcellular location is the cytoplasm. The enzyme catalyses (2R)-3-phosphoglycerate + ATP = (2R)-3-phospho-glyceroyl phosphate + ADP. The protein operates within carbohydrate degradation; glycolysis; pyruvate from D-glyceraldehyde 3-phosphate: step 2/5. This chain is Phosphoglycerate kinase, found in Halorubrum lacusprofundi (strain ATCC 49239 / DSM 5036 / JCM 8891 / ACAM 34).